A 380-amino-acid polypeptide reads, in one-letter code: Ubiquitin-like protein 7 (380 aa).

The region spanning 18–98 (APKSILRLPE…VLRKSWPEPD (81 aa)) is the Ubiquitin-like domain. The disordered stretch occupies residues 201-313 (PMPGADSSSR…SSSVQSGTPI (113 aa)). Position 230 is a phosphoserine (Ser-230). Low complexity-rich tracts occupy residues 239–255 (SARS…RPAS) and 270–312 (SELA…SGTP). The UBA domain maps to 333–377 (SLQSQWQPQLQQLRDMGIQDDELSLRALQATGGDIQAALELIFAG).

In terms of assembly, binds ubiquitin. Interacts with MAVS; this interaction enhances TRIM21-dependent 'Lys-27'-linked polyubiquitination of MAVS. In terms of processing, deubiquitinated by OTUD4 which stabilizes UBL7 expression.

Functionally, interferon-stimulated protein that positively regulates RNA virus-triggered innate immune signaling. Mechanistically, promotes 'Lys-27'-linked polyubiquitination of MAVS through TRIM21 leading to enhanced the IFN signaling pathway. The protein is Ubiquitin-like protein 7 (UBL7) of Bos taurus (Bovine).